The chain runs to 332 residues: Nucleoid-associated protein VP2128 (332 aa).

The protein belongs to the YejK family.

It is found in the cytoplasm. Its subcellular location is the nucleoid. The sequence is that of Nucleoid-associated protein VP2128 from Vibrio parahaemolyticus serotype O3:K6 (strain RIMD 2210633).